The sequence spans 601 residues: Aspartate--tRNA(Asp/Asn) ligase (601 aa).

E173 lines the L-aspartate pocket. The interval 197 to 200 (QLFK) is aspartate. R219 is a binding site for L-aspartate. Residues 219-221 (RDE) and Q228 each bind ATP. H456 contacts L-aspartate. E490 is an ATP binding site. R497 lines the L-aspartate pocket. An ATP-binding site is contributed by 542–545 (GWDR). Residues 566–601 (GGGYDPLTQAPAPITAEQRRESGVDAVPDDETAPQA) are disordered. Acidic residues predominate over residues 592–601 (VPDDETAPQA).

The protein belongs to the class-II aminoacyl-tRNA synthetase family. Type 1 subfamily. In terms of assembly, homodimer.

Its subcellular location is the cytoplasm. It catalyses the reaction tRNA(Asx) + L-aspartate + ATP = L-aspartyl-tRNA(Asx) + AMP + diphosphate. In terms of biological role, aspartyl-tRNA synthetase with relaxed tRNA specificity since it is able to aspartylate not only its cognate tRNA(Asp) but also tRNA(Asn). Reaction proceeds in two steps: L-aspartate is first activated by ATP to form Asp-AMP and then transferred to the acceptor end of tRNA(Asp/Asn). This Beutenbergia cavernae (strain ATCC BAA-8 / DSM 12333 / CCUG 43141 / JCM 11478 / NBRC 16432 / NCIMB 13614 / HKI 0122) protein is Aspartate--tRNA(Asp/Asn) ligase.